Here is a 960-residue protein sequence, read N- to C-terminus: Vacuolar membrane protease (960 aa).

Over M1 to K57 the chain is Cytoplasmic. The disordered stretch occupies residues E22 to R41. Residues G24 to K33 show a composition bias toward low complexity. Residues T58–D78 traverse the membrane as a helical segment. Topologically, residues N79–K401 are vacuolar. Residue N148 is glycosylated (N-linked (GlcNAc...) asparagine). Residues H189 and D201 each coordinate Zn(2+). E235 acts as the Proton acceptor in catalysis. The Zn(2+) site is built by E236, E261, and H333. Residues I402–I422 traverse the membrane as a helical segment. Over R423–S432 the chain is Cytoplasmic. The chain crosses the membrane as a helical span at residues S433–V453. Residues E454 to T476 are Vacuolar-facing. Residues S477–A497 form a helical membrane-spanning segment. At E498–R502 the chain is on the cytoplasmic side. Residues L503–G523 traverse the membrane as a helical segment. The Vacuolar segment spans residues L524–E535. A helical transmembrane segment spans residues F536–W556. The Cytoplasmic portion of the chain corresponds to S557–L635. Basic and acidic residues predominate over residues N587–A605. The segment at N587–R614 is disordered. The helical transmembrane segment at I636–V656 threads the bilayer. N-linked (GlcNAc...) asparagine glycosylation occurs at N657. Topologically, residues N657–T668 are vacuolar. A helical membrane pass occupies residues F669–A689. Over G690–M696 the chain is Cytoplasmic. Residues V697 to F717 form a helical membrane-spanning segment. The Vacuolar portion of the chain corresponds to N718 to V960. Residues N736, N763, N803, N875, and N921 are each glycosylated (N-linked (GlcNAc...) asparagine).

Belongs to the peptidase M28 family. Zn(2+) is required as a cofactor.

It is found in the vacuole membrane. In terms of biological role, may be involved in vacuolar sorting and osmoregulation. The chain is Vacuolar membrane protease from Lodderomyces elongisporus (strain ATCC 11503 / CBS 2605 / JCM 1781 / NBRC 1676 / NRRL YB-4239) (Yeast).